The following is a 713-amino-acid chain: MSANKELQQGYSDYSAASDQAALLNRLITAMQKGELTDELLEHIPELGDAKKLNDKLKYRKSILEKSIAEQAAKNKKNGVKATSTSSPSSSTSAPAEKKAKKDGKTGGAPPKQAKKVDYVTVEDYGSSIFGRLQSLFKKAIEDAFPGLDVPLLLAETPNPQFGDYQCNSAMPIAAKLKANKINKRPGDVAKEIQAKLPTKIDFVEKIDVMPAGFINIFLNTDYLRRQISLLASEGVKLPKLTRKRVLVDFSSPNIAKEMHVGHLRSTIIGDSICRLFEAVGFDVLRVNHIGDWGTQFGMLIAHLYDRFPDFLKKLPDISDLQAFYKESKKRFDEDEQFKKRAYEYVVKLQSHDGDIVKAWNTICDVSKKYNQIVYNYLDIKIKDVGESFYQDKMIELVKWVKTNKPDMLREEDGRQIMFPTGCDIPLTVVKSDGGFTYDTSDLAALKYRMLEEKCDWNIYVVDSGQSLHLETVYAAGRDFGWYDESIQRVEHVAFGLVLGDDKKKFKTRSGETVRLLDLLSEGVKRATEKLIEKGRETAMSEEQLVAARDAVAFGCVKYADLSHTRTQDYVFSFDRMLEDRGNTAVYLLYAYTRIQSIFEKDEVKNVDLVKYIASTPTLPLDHPGEFKLAKQLLKLSDCVLLVLDSLMLHQMCDYVYQLATLFHDFYNECYVIENKEGEKPFVHMHRLALCDVTRKVMSTCFKILGLREVNKM.

The disordered stretch occupies residues 74–113 (KNKKNGVKATSTSSPSSSTSAPAEKKAKKDGKTGGAPPKQ). Residues 81–95 (KATSTSSPSSSTSAP) are compositionally biased toward low complexity. The segment covering 96–105 (AEKKAKKDGK) has biased composition (basic and acidic residues). Residues 252–254 (SPN), H263, Y438, D442, and Q466 contribute to the L-arginine site. The 'HIGH' region signature appears at 252–263 (SPNIAKEMHVGH). The interaction with tRNA stretch occupies residues 583 to 597 (NTAVYLLYAYTRIQS).

This sequence belongs to the class-I aminoacyl-tRNA synthetase family.

The protein resides in the cytoplasm. It is found in the cytosol. It catalyses the reaction tRNA(Arg) + L-arginine + ATP = L-arginyl-tRNA(Arg) + AMP + diphosphate. Forms part of a macromolecular complex that catalyzes the attachment of specific amino acids to cognate tRNAs during protein synthesis. This chain is Probable arginine--tRNA ligase, cytoplasmic, found in Caenorhabditis elegans.